We begin with the raw amino-acid sequence, 162 residues long: Large ribosomal subunit protein uL10 (162 aa).

This sequence belongs to the universal ribosomal protein uL10 family. In terms of assembly, part of the ribosomal stalk of the 50S ribosomal subunit. The N-terminus interacts with L11 and the large rRNA to form the base of the stalk. The C-terminus forms an elongated spine to which L12 dimers bind in a sequential fashion forming a multimeric L10(L12)X complex.

Functionally, forms part of the ribosomal stalk, playing a central role in the interaction of the ribosome with GTP-bound translation factors. This chain is Large ribosomal subunit protein uL10, found in Vibrio cholerae serotype O1 (strain ATCC 39541 / Classical Ogawa 395 / O395).